Reading from the N-terminus, the 287-residue chain is 4-hydroxybenzoate octaprenyltransferase (287 aa).

6 consecutive transmembrane segments (helical) span residues 41 to 61 (WPLI…GCAM), 89 to 109 (WEAV…ILPL), 133 to 153 (FFAI…PMAF), 158 to 178 (NTVP…SIAY), 218 to 238 (LGIY…WVGW), and 267 to 287 (NNWL…MAGS).

Belongs to the UbiA prenyltransferase family. The cofactor is Mg(2+).

The protein resides in the cell inner membrane. The enzyme catalyses all-trans-octaprenyl diphosphate + 4-hydroxybenzoate = 4-hydroxy-3-(all-trans-octaprenyl)benzoate + diphosphate. Its pathway is cofactor biosynthesis; ubiquinone biosynthesis. Functionally, catalyzes the prenylation of para-hydroxybenzoate (PHB) with an all-trans polyprenyl group. Mediates the second step in the final reaction sequence of ubiquinone-8 (UQ-8) biosynthesis, which is the condensation of the polyisoprenoid side chain with PHB, generating the first membrane-bound Q intermediate 3-octaprenyl-4-hydroxybenzoate. This Burkholderia multivorans (strain ATCC 17616 / 249) protein is 4-hydroxybenzoate octaprenyltransferase.